The following is a 631-amino-acid chain: Phosphomethylpyrimidine synthase (631 aa).

Residues N239, M268, Y297, H333, 353–355 (SRG), 394–397 (DGLR), and E433 contribute to the substrate site. H437 contributes to the Zn(2+) binding site. Residue Y460 coordinates substrate. Residue H501 coordinates Zn(2+). Residues C581, C584, and C589 each coordinate [4Fe-4S] cluster.

This sequence belongs to the ThiC family. As to quaternary structure, homodimer. Requires [4Fe-4S] cluster as cofactor.

It carries out the reaction 5-amino-1-(5-phospho-beta-D-ribosyl)imidazole + S-adenosyl-L-methionine = 4-amino-2-methyl-5-(phosphooxymethyl)pyrimidine + CO + 5'-deoxyadenosine + formate + L-methionine + 3 H(+). It participates in cofactor biosynthesis; thiamine diphosphate biosynthesis. Its function is as follows. Catalyzes the synthesis of the hydroxymethylpyrimidine phosphate (HMP-P) moiety of thiamine from aminoimidazole ribotide (AIR) in a radical S-adenosyl-L-methionine (SAM)-dependent reaction. The sequence is that of Phosphomethylpyrimidine synthase from Escherichia coli O127:H6 (strain E2348/69 / EPEC).